The chain runs to 181 residues: Achaete-scute homolog 3 (181 aa).

The tract at residues 93–106 (AFTRKRNERERQRV) is basic motif. In terms of domain architecture, bHLH spans 93-145 (AFTRKRNERERQRVKCVNEGYAQLRHHLPEEYLEKRLSKVETLRAAIKYINYL). Residues 107 to 145 (KCVNEGYAQLRHHLPEEYLEKRLSKVETLRAAIKYINYL) form a helix-loop-helix motif region.

Efficient DNA binding requires dimerization with another bHLH protein. In terms of tissue distribution, widely expressed in fetal and adult tissues.

It localises to the nucleus. Transcriptional repressor. Inhibits myogenesis. Plays a role in progenitor cells which differentiate into ductal and acinar, but not myoepithelial, cell lineages in the salivary glands. Involved in the functions of the microvillar cells and Bowman's glands and probably, in a non-cell-autonomous manner, in the development or regeneration of a complete olfactory epithelium (OE). The chain is Achaete-scute homolog 3 from Homo sapiens (Human).